A 596-amino-acid polypeptide reads, in one-letter code: Inactive metallocarboxypeptidase ECM14 (596 aa).

Residues 1–22 (MHFSVRLSLFLTLASSLPLVSA) form the signal peptide. Residues 23–184 (VPQHEDQAYT…QTIYESYPKA (162 aa)) constitute a propeptide that is removed on maturation. Positions 182 to 211 (PKAGSASPSQQGPTTRRFSPSASTSKSKPH) are disordered. Residues 187–207 (ASPSQQGPTTRRFSPSASTSK) are compositionally biased toward polar residues. In terms of domain architecture, Peptidase M14 spans 220–546 (DYQPLSVLLP…RAMVAMGKFL (327 aa)). Positions 285 and 288 each coordinate Zn(2+). Residues 285 to 288 (HARE), arginine 343, and 360 to 361 (DH) contribute to the substrate site. The cysteines at positions 354 and 377 are disulfide-linked. An N-linked (GlcNAc...) asparagine glycan is attached at asparagine 370. Residue histidine 417 participates in Zn(2+) binding. 418 to 419 (SY) lines the substrate pocket. The segment at 557–596 (DGLRASEEPQDYDNDLEDGEDDKDEQGSTVFRAQADDLQS) is disordered. Over residues 564-580 (EPQDYDNDLEDGEDDKD) the composition is skewed to acidic residues. Residues 583–596 (GSTVFRAQADDLQS) are compositionally biased toward polar residues.

It belongs to the peptidase M14 family. Requires Zn(2+) as cofactor.

The protein resides in the vacuole. The protein localises to the secreted. Its function is as follows. Inactive carboxypeptidase that may play a role in cell wall organization and biogenesis. This Arthroderma benhamiae (strain ATCC MYA-4681 / CBS 112371) (Trichophyton mentagrophytes) protein is Inactive metallocarboxypeptidase ECM14 (ECM14).